A 99-amino-acid polypeptide reads, in one-letter code: NAD(P)H-quinone oxidoreductase subunit 4L, chloroplastic (99 aa).

3 helical membrane-spanning segments follow: residues 1–21, 31–51, and 59–79; these read MFEQ…FGLI, MSLE…SNLF, and IFTL…LAIA.

The protein belongs to the complex I subunit 4L family. As to quaternary structure, NDH is composed of at least 16 different subunits, 5 of which are encoded in the nucleus.

It is found in the plastid. The protein localises to the chloroplast thylakoid membrane. The catalysed reaction is a plastoquinone + NADH + (n+1) H(+)(in) = a plastoquinol + NAD(+) + n H(+)(out). It catalyses the reaction a plastoquinone + NADPH + (n+1) H(+)(in) = a plastoquinol + NADP(+) + n H(+)(out). NDH shuttles electrons from NAD(P)H:plastoquinone, via FMN and iron-sulfur (Fe-S) centers, to quinones in the photosynthetic chain and possibly in a chloroplast respiratory chain. The immediate electron acceptor for the enzyme in this species is believed to be plastoquinone. Couples the redox reaction to proton translocation, and thus conserves the redox energy in a proton gradient. The polypeptide is NAD(P)H-quinone oxidoreductase subunit 4L, chloroplastic (Adiantum capillus-veneris (Maidenhair fern)).